A 1435-amino-acid polypeptide reads, in one-letter code: Putative ATP-dependent RNA helicase YLR419W (1435 aa).

Disordered regions lie at residues Met1 to Ser57 and Leu226 to His251. The residue at position 9 (Ser9) is a Phosphoserine. Basic and acidic residues predominate over residues Lys31–Ala43. Residues Gln45–Ser57 show a composition bias toward polar residues. Residues Pro365–Glu406 form the UBA domain. One can recognise an RWD domain in the interval Gln430–Ile531. The segment at Asp543–Arg566 is disordered. Polar residues predominate over residues Arg551–Arg566. In terms of domain architecture, Helicase ATP-binding spans Ile614 to Glu782. Gly627–Ser634 is a binding site for ATP. A DEAH box motif is present at residues Asp729 to His732. Ser816 carries the phosphoserine modification. Positions Leu845 to Gly1020 constitute a Helicase C-terminal domain.

This sequence belongs to the DEAD box helicase family. DEAH subfamily.

The protein localises to the cytoplasm. The enzyme catalyses ATP + H2O = ADP + phosphate + H(+). Its function is as follows. Probable ATP-binding RNA helicase. The protein is Putative ATP-dependent RNA helicase YLR419W of Saccharomyces cerevisiae (strain ATCC 204508 / S288c) (Baker's yeast).